The primary structure comprises 168 residues: D-aminoacyl-tRNA deacylase 2 (168 aa).

The Gly-transPro motif, allows the protein to recognize chirality of D-amino acids motif lies at Gly-160–Pro-161.

It belongs to the DTD family. In terms of assembly, homodimer.

It is found in the cytoplasm. It carries out the reaction a D-aminoacyl-tRNA + H2O = a tRNA + a D-alpha-amino acid + H(+). It catalyses the reaction glycyl-tRNA(Ala) + H2O = tRNA(Ala) + glycine + H(+). The enzyme catalyses D-tyrosyl-tRNA(Tyr) + H2O = D-tyrosine + tRNA(Tyr). The catalysed reaction is L-alanyl-tRNA(Thr) + H2O = tRNA(Thr) + L-alanine + H(+). Functionally, deacylates mischarged D-aminoacyl-tRNAs. Also deacylates mischarged glycyl-tRNA(Ala), protecting cells against glycine mischarging by AlaRS. Probably acts by rejecting L-amino acids from its binding site rather than specific recognition of D-amino acids. Catalyzes the hydrolysis of D-tyrosyl-tRNA(Tyr), has no activity on correctly charged L-tyrosyl-tRNA(Tyr). By recycling D-aminoacyl-tRNA to D-amino acids and free tRNA molecules, this enzyme counteracts the toxicity associated with the formation of D-aminoacyl-tRNA entities in vivo and helps enforce protein L-homochirality. In contrast to DTD1, deacylates L-Ala mischarged on tRNA(Thr)(G4.U69) by alanine-tRNA ligase AARS. Can deacylate L-Ala due to a relaxed specificity for substrate chirality caused by the trans conformation of the Gly-Pro motif in the active site. Also hydrolyzes correctly charged, achiral, glycyl-tRNA(Gly) in vitro, although in vivo EEF1A1/EF-Tu may protect cognate achiral glycyl-tRNA(Gly) from DTD2-mediated deacetylation. This Homo sapiens (Human) protein is D-aminoacyl-tRNA deacylase 2 (DTD2).